Reading from the N-terminus, the 636-residue chain is Chaperone protein DnaK (636 aa).

Threonine 203 carries the phosphothreonine; by autocatalysis modification. Positions 602–636 (VYGKQQEGAPAQEEPSAEGKKADDEGTVEGEFREV) are disordered. Over residues 618-636 (AEGKKADDEGTVEGEFREV) the composition is skewed to basic and acidic residues.

The protein belongs to the heat shock protein 70 family.

In terms of biological role, acts as a chaperone. The sequence is that of Chaperone protein DnaK from Dehalococcoides mccartyi (strain ATCC BAA-2100 / JCM 16839 / KCTC 5957 / BAV1).